Reading from the N-terminus, the 94-residue chain is Pyrimidine/purine nucleoside phosphorylase (94 aa).

Belongs to the nucleoside phosphorylase PpnP family.

It carries out the reaction a purine D-ribonucleoside + phosphate = a purine nucleobase + alpha-D-ribose 1-phosphate. The enzyme catalyses adenosine + phosphate = alpha-D-ribose 1-phosphate + adenine. The catalysed reaction is cytidine + phosphate = cytosine + alpha-D-ribose 1-phosphate. It catalyses the reaction guanosine + phosphate = alpha-D-ribose 1-phosphate + guanine. It carries out the reaction inosine + phosphate = alpha-D-ribose 1-phosphate + hypoxanthine. The enzyme catalyses thymidine + phosphate = 2-deoxy-alpha-D-ribose 1-phosphate + thymine. The catalysed reaction is uridine + phosphate = alpha-D-ribose 1-phosphate + uracil. It catalyses the reaction xanthosine + phosphate = alpha-D-ribose 1-phosphate + xanthine. In terms of biological role, catalyzes the phosphorolysis of diverse nucleosides, yielding D-ribose 1-phosphate and the respective free bases. Can use uridine, adenosine, guanosine, cytidine, thymidine, inosine and xanthosine as substrates. Also catalyzes the reverse reactions. This Saccharophagus degradans (strain 2-40 / ATCC 43961 / DSM 17024) protein is Pyrimidine/purine nucleoside phosphorylase.